A 234-amino-acid polypeptide reads, in one-letter code: tRNA (guanine-N(1)-)-methyltransferase (234 aa).

Residues glycine 112 and 132–137 (IGDFIL) each bind S-adenosyl-L-methionine.

It belongs to the RNA methyltransferase TrmD family. In terms of assembly, homodimer.

It localises to the cytoplasm. It carries out the reaction guanosine(37) in tRNA + S-adenosyl-L-methionine = N(1)-methylguanosine(37) in tRNA + S-adenosyl-L-homocysteine + H(+). Its function is as follows. Specifically methylates guanosine-37 in various tRNAs. This chain is tRNA (guanine-N(1)-)-methyltransferase, found in Campylobacter jejuni (strain RM1221).